Consider the following 445-residue polypeptide: Phosphoglucosamine mutase 1 (445 aa).

Catalysis depends on serine 102, which acts as the Phosphoserine intermediate. Mg(2+) is bound by residues serine 102, aspartate 241, aspartate 243, and aspartate 245. Serine 102 carries the post-translational modification Phosphoserine.

This sequence belongs to the phosphohexose mutase family. Requires Mg(2+) as cofactor. In terms of processing, activated by phosphorylation.

The catalysed reaction is alpha-D-glucosamine 1-phosphate = D-glucosamine 6-phosphate. Its function is as follows. Catalyzes the conversion of glucosamine-6-phosphate to glucosamine-1-phosphate. The sequence is that of Phosphoglucosamine mutase 1 from Shewanella sp. (strain MR-4).